The chain runs to 321 residues: Probable pectate lyase A (321 aa).

The signal sequence occupies residues 1 to 18 (MKFVATLIACGLSGLALA). N-linked (GlcNAc...) asparagine glycosylation occurs at N93. Ca(2+) is bound by residues D134, D163, and D167. Residue R220 is part of the active site. The N-linked (GlcNAc...) asparagine glycan is linked to N238.

It belongs to the polysaccharide lyase 1 family. Ca(2+) serves as cofactor.

It is found in the secreted. It catalyses the reaction Eliminative cleavage of (1-&gt;4)-alpha-D-galacturonan to give oligosaccharides with 4-deoxy-alpha-D-galact-4-enuronosyl groups at their non-reducing ends.. In terms of biological role, pectinolytic enzyme consist of four classes of enzymes: pectin lyase, polygalacturonase, pectin methylesterase and rhamnogalacturonase. Among pectinolytic enzymes, pectin lyase is the most important in depolymerization of pectin, since it cleaves internal glycosidic bonds of highly methylated pectins. Favors pectate, the anion, over pectin, the methyl ester. This is Probable pectate lyase A (plyA) from Aspergillus fumigatus (strain ATCC MYA-4609 / CBS 101355 / FGSC A1100 / Af293) (Neosartorya fumigata).